The sequence spans 158 residues: NAD(P)H-quinone oxidoreductase subunit J, chloroplastic (158 aa).

Belongs to the complex I 30 kDa subunit family. In terms of assembly, NDH is composed of at least 16 different subunits, 5 of which are encoded in the nucleus.

Its subcellular location is the plastid. It is found in the chloroplast thylakoid membrane. The catalysed reaction is a plastoquinone + NADH + (n+1) H(+)(in) = a plastoquinol + NAD(+) + n H(+)(out). The enzyme catalyses a plastoquinone + NADPH + (n+1) H(+)(in) = a plastoquinol + NADP(+) + n H(+)(out). NDH shuttles electrons from NAD(P)H:plastoquinone, via FMN and iron-sulfur (Fe-S) centers, to quinones in the photosynthetic chain and possibly in a chloroplast respiratory chain. The immediate electron acceptor for the enzyme in this species is believed to be plastoquinone. Couples the redox reaction to proton translocation, and thus conserves the redox energy in a proton gradient. This chain is NAD(P)H-quinone oxidoreductase subunit J, chloroplastic, found in Solanum bulbocastanum (Wild potato).